Reading from the N-terminus, the 192-residue chain is Peptide methionine sulfoxide reductase MsrA 1 (192 aa).

Cys-25 is an active-site residue.

It belongs to the MsrA Met sulfoxide reductase family.

It carries out the reaction L-methionyl-[protein] + [thioredoxin]-disulfide + H2O = L-methionyl-(S)-S-oxide-[protein] + [thioredoxin]-dithiol. The catalysed reaction is [thioredoxin]-disulfide + L-methionine + H2O = L-methionine (S)-S-oxide + [thioredoxin]-dithiol. Its function is as follows. Has an important function as a repair enzyme for proteins that have been inactivated by oxidation. Catalyzes the reversible oxidation-reduction of methionine sulfoxide in proteins to methionine. This is Peptide methionine sulfoxide reductase MsrA 1 from Rhodopirellula baltica (strain DSM 10527 / NCIMB 13988 / SH1).